A 94-amino-acid polypeptide reads, in one-letter code: FXYD domain-containing ion transport regulator 6 (94 aa).

Positions 1–17 (METVLVLCSLLAPVVLA) are cleaved as a signal peptide. Over 18 to 34 (SAAEKEKEKDPFYYDYQ) the chain is Extracellular. A helical membrane pass occupies residues 35 to 57 (TLRIGGLVFAVVLFSVGILLILS). The Cytoplasmic portion of the chain corresponds to 58–94 (RRCKCSFNQKPRAPGDEEAQVENLITTNAAEPQKAEN).

It belongs to the FXYD family. Regulatory subunit of the sodium/potassium-transporting ATPase which is composed of a catalytic alpha subunit, a non-catalytic beta subunit and an additional regulatory subunit. The regulatory subunit, a member of the FXYD protein family, modulates the enzymatic activity in a tissue- and isoform-specific way by changing affinities of the Na+/K+-ATPase toward Na(+), K(+) or ATP.

Its subcellular location is the cell membrane. Associates with and regulates the activity of the sodium/potassium-transporting ATPase (NKA) which catalyzes the hydrolysis of ATP coupled with the exchange of Na(+) and K(+) ions across the plasma membrane. Reduces the apparent affinity for intracellular Na(+) with no change in the apparent affinity for extracellular K(+). In addition to modulating NKA kinetics, may also function as a regulator of NKA localization to the plasma membrane. This Mus musculus (Mouse) protein is FXYD domain-containing ion transport regulator 6 (Fxyd6).